The sequence spans 332 residues: Ketol-acid reductoisomerase (NADP(+)) (332 aa).

In terms of domain architecture, KARI N-terminal Rossmann spans 1–182 (MAQVWKDAEI…GSARAGLIKT (182 aa)). Residues 25–28 (YGIQ), K48, S53, and 83–86 (DMIQ) contribute to the NADP(+) site. The active site involves H108. G134 serves as a coordination point for NADP(+). A KARI C-terminal knotted domain is found at 183-329 (TFKEEVETDW…RKMRKMMWPD (147 aa)). Mg(2+)-binding residues include D191, E195, E227, and E231. S252 is a substrate binding site.

It belongs to the ketol-acid reductoisomerase family. It depends on Mg(2+) as a cofactor.

The enzyme catalyses (2R)-2,3-dihydroxy-3-methylbutanoate + NADP(+) = (2S)-2-acetolactate + NADPH + H(+). It carries out the reaction (2R,3R)-2,3-dihydroxy-3-methylpentanoate + NADP(+) = (S)-2-ethyl-2-hydroxy-3-oxobutanoate + NADPH + H(+). It participates in amino-acid biosynthesis; L-isoleucine biosynthesis; L-isoleucine from 2-oxobutanoate: step 2/4. It functions in the pathway amino-acid biosynthesis; L-valine biosynthesis; L-valine from pyruvate: step 2/4. Functionally, involved in the biosynthesis of branched-chain amino acids (BCAA). Catalyzes an alkyl-migration followed by a ketol-acid reduction of (S)-2-acetolactate (S2AL) to yield (R)-2,3-dihydroxy-isovalerate. In the isomerase reaction, S2AL is rearranged via a Mg-dependent methyl migration to produce 3-hydroxy-3-methyl-2-ketobutyrate (HMKB). In the reductase reaction, this 2-ketoacid undergoes a metal-dependent reduction by NADPH to yield (R)-2,3-dihydroxy-isovalerate. The sequence is that of Ketol-acid reductoisomerase (NADP(+)) from Cenarchaeum symbiosum (strain A).